A 150-amino-acid chain; its full sequence is Male-specific protein scotti (150 aa).

The interval 60–84 (PPMAVFPARGGPNGGPPRLRKKRSF) is disordered. N-linked (GlcNAc...) asparagine glycosylation is present at Asn131.

It belongs to the male-specific scotti family.

Its function is as follows. Post-meiotically transcribed gene that has a role in late spermiogenesis; required for actin cone progression during spermatid individualization. This chain is Male-specific protein scotti, found in Drosophila yakuba (Fruit fly).